A 189-amino-acid polypeptide reads, in one-letter code: Mediator of RNA polymerase II transcription subunit 10b (189 aa).

Residues 1-22 (MDPTQNTSAGIGGSNGTIRYQT) form a disordered region.

Belongs to the Mediator complex subunit 10 family. In terms of assembly, component of the Mediator complex.

It is found in the nucleus. In terms of biological role, component of the Mediator complex, a coactivator involved in the regulated transcription of nearly all RNA polymerase II-dependent genes. Mediator functions as a bridge to convey information from gene-specific regulatory proteins to the basal RNA polymerase II transcription machinery. The Mediator complex, having a compact conformation in its free form, is recruited to promoters by direct interactions with regulatory proteins and serves for the assembly of a functional preinitiation complex with RNA polymerase II and the general transcription factors. The sequence is that of Mediator of RNA polymerase II transcription subunit 10b (MED10B) from Arabidopsis thaliana (Mouse-ear cress).